A 307-amino-acid chain; its full sequence is Ubiquitin recognition factor in ER-associated degradation protein 1 (307 aa).

Position 1 is an N-acetylmethionine (methionine 1). Residues serine 129, serine 231, serine 245, serine 247, and serine 299 each carry the phosphoserine modification. Disordered regions lie at residues 231–256 (SGNR…DIKR) and 288–307 (GRFV…GRKP).

The protein belongs to the UFD1 family. Heterodimer with NPLOC4, this heterodimer binds VCP and inhibits Golgi membrane fusion. Interacts with USP13. Interacts with ZFAND2B; probably through VCP. In terms of tissue distribution, found in adult heart, skeletal muscle and pancreas, and in fetal liver and kidney.

It is found in the nucleus. Its subcellular location is the cytoplasm. The protein localises to the cytosol. The protein operates within protein degradation; proteasomal ubiquitin-dependent pathway. Its function is as follows. Essential component of the ubiquitin-dependent proteolytic pathway which degrades ubiquitin fusion proteins. The ternary complex containing UFD1, VCP and NPLOC4 binds ubiquitinated proteins and is necessary for the export of misfolded proteins from the ER to the cytoplasm, where they are degraded by the proteasome. The NPLOC4-UFD1-VCP complex regulates spindle disassembly at the end of mitosis and is necessary for the formation of a closed nuclear envelope. It may be involved in the development of some ectoderm-derived structures. Acts as a negative regulator of type I interferon production via the complex formed with VCP and NPLOC4, which binds to RIGI and recruits RNF125 to promote ubiquitination and degradation of RIGI. The polypeptide is Ubiquitin recognition factor in ER-associated degradation protein 1 (Homo sapiens (Human)).